Reading from the N-terminus, the 284-residue chain is Diaminopimelate epimerase (284 aa).

Substrate contacts are provided by Asn-20, Gln-53, and Asn-73. The active-site Proton donor is Cys-82. Substrate-binding positions include 83-84, Asn-167, Asn-200, and 218-219; these read GN and ER. Catalysis depends on Cys-227, which acts as the Proton acceptor. A substrate-binding site is contributed by 228–229; the sequence is GS.

Belongs to the diaminopimelate epimerase family. Homodimer.

Its subcellular location is the cytoplasm. It carries out the reaction (2S,6S)-2,6-diaminopimelate = meso-2,6-diaminopimelate. The protein operates within amino-acid biosynthesis; L-lysine biosynthesis via DAP pathway; DL-2,6-diaminopimelate from LL-2,6-diaminopimelate: step 1/1. Its function is as follows. Catalyzes the stereoinversion of LL-2,6-diaminopimelate (L,L-DAP) to meso-diaminopimelate (meso-DAP), a precursor of L-lysine and an essential component of the bacterial peptidoglycan. The chain is Diaminopimelate epimerase from Xanthomonas oryzae pv. oryzae (strain MAFF 311018).